The chain runs to 123 residues: Small ribosomal subunit protein uS12 (123 aa).

A 3-methylthioaspartic acid modification is found at Asp-89. The tract at residues 100–123 is disordered; sequence GSLDTSGVKGRNQGRSKYGTKRPK. Residues 111-123 show a composition bias toward basic residues; the sequence is NQGRSKYGTKRPK.

Belongs to the universal ribosomal protein uS12 family. In terms of assembly, part of the 30S ribosomal subunit. Contacts proteins S8 and S17. May interact with IF1 in the 30S initiation complex.

With S4 and S5 plays an important role in translational accuracy. Functionally, interacts with and stabilizes bases of the 16S rRNA that are involved in tRNA selection in the A site and with the mRNA backbone. Located at the interface of the 30S and 50S subunits, it traverses the body of the 30S subunit contacting proteins on the other side and probably holding the rRNA structure together. The combined cluster of proteins S8, S12 and S17 appears to hold together the shoulder and platform of the 30S subunit. In Pseudomonas fluorescens (strain ATCC BAA-477 / NRRL B-23932 / Pf-5), this protein is Small ribosomal subunit protein uS12.